The primary structure comprises 294 residues: Picrinine-N-methytransferase TMT2 (294 aa).

Positions 75-84 are SAM motif I; the sequence is LLDVGCGLGG. Positions 137-143 match the Vacuolar targeting signal motif; the sequence is DGEFDVV. Residues 138–146 form an SAM motif II region; sequence GEFDVVFTL. Residues 165–174 form an SAM motif III region; it reads VGSPGAAIVV.

This sequence belongs to the class I-like SAM-binding methyltransferase superfamily. gTMT family. Homodimer.

Its subcellular location is the vacuole membrane. The catalysed reaction is picrinine + S-adenosyl-L-methionine = ervincine + S-adenosyl-L-homocysteine + H(+). Its pathway is alkaloid biosynthesis; vindoline biosynthesis. Its function is as follows. S-adenosyl-L-methionine-dependent N-methyltransferase involved in the biosynthesis of biologically active monoterpenoid indole alkaloids (MIAs) natural products including vindoline. Catalyzes the conversion of picrinine to N-methylpicrinine (ervincine). The chain is Picrinine-N-methytransferase TMT2 from Catharanthus roseus (Madagascar periwinkle).